The following is a 543-amino-acid chain: CTP synthase (543 aa).

Positions 1–265 are amidoligase domain; sequence MTNYIFVTGG…DELVVQRFGL (265 aa). Residue serine 13 coordinates CTP. A UTP-binding site is contributed by serine 13. Residues 14 to 19 and aspartate 71 contribute to the ATP site; that span reads SLGKGI. Residues aspartate 71 and glutamate 139 each coordinate Mg(2+). Residues 146–148, 186–191, and lysine 222 contribute to the CTP site; these read DIE and KTKPTQ. Residues 186–191 and lysine 222 contribute to the UTP site; that span reads KTKPTQ. 238 to 240 contacts ATP; it reads KDA. The 252-residue stretch at 290–541 folds into the Glutamine amidotransferase type-1 domain; that stretch reads TIGMVGKYVE…VKAAGEYYKN (252 aa). Glycine 351 serves as a coordination point for L-glutamine. Cysteine 378 functions as the Nucleophile; for glutamine hydrolysis in the catalytic mechanism. Residues 379–382, glutamate 402, and arginine 469 contribute to the L-glutamine site; that span reads LGMQ. Active-site residues include histidine 514 and glutamate 516.

This sequence belongs to the CTP synthase family. In terms of assembly, homotetramer.

The catalysed reaction is UTP + L-glutamine + ATP + H2O = CTP + L-glutamate + ADP + phosphate + 2 H(+). It catalyses the reaction L-glutamine + H2O = L-glutamate + NH4(+). The enzyme catalyses UTP + NH4(+) + ATP = CTP + ADP + phosphate + 2 H(+). The protein operates within pyrimidine metabolism; CTP biosynthesis via de novo pathway; CTP from UDP: step 2/2. Its activity is regulated as follows. Allosterically activated by GTP, when glutamine is the substrate; GTP has no effect on the reaction when ammonia is the substrate. The allosteric effector GTP functions by stabilizing the protein conformation that binds the tetrahedral intermediate(s) formed during glutamine hydrolysis. Inhibited by the product CTP, via allosteric rather than competitive inhibition. In terms of biological role, catalyzes the ATP-dependent amination of UTP to CTP with either L-glutamine or ammonia as the source of nitrogen. Regulates intracellular CTP levels through interactions with the four ribonucleotide triphosphates. The protein is CTP synthase of Pseudoalteromonas atlantica (strain T6c / ATCC BAA-1087).